A 228-amino-acid chain; its full sequence is Triosephosphate isomerase (228 aa).

11–13 (NFK) is a binding site for substrate. Histidine 95 functions as the Electrophile in the catalytic mechanism. Glutamate 143 acts as the Proton acceptor in catalysis. Residues isoleucine 148, glycine 183, and 204 to 205 (AS) each bind substrate.

Belongs to the triosephosphate isomerase family. Homotetramer; dimer of dimers.

Its subcellular location is the cytoplasm. The catalysed reaction is D-glyceraldehyde 3-phosphate = dihydroxyacetone phosphate. Its pathway is carbohydrate biosynthesis; gluconeogenesis. It participates in carbohydrate degradation; glycolysis; D-glyceraldehyde 3-phosphate from glycerone phosphate: step 1/1. Its function is as follows. Involved in the gluconeogenesis. Catalyzes stereospecifically the conversion of dihydroxyacetone phosphate (DHAP) to D-glyceraldehyde-3-phosphate (G3P). This chain is Triosephosphate isomerase, found in Pyrococcus abyssi (strain GE5 / Orsay).